Consider the following 356-residue polypeptide: Nuclear hormone receptor family member nhr-169 (356 aa).

The segment at residues 16–90 (DPICSVCNFS…AGMKRSLVKE (75 aa)) is a DNA-binding region (nuclear receptor). NR C4-type zinc fingers lie at residues 19–40 (CSVCNFSSLIAPHFGGLVCSAC) and 56–72 (CKKDNQCKGMRKNCRAC). Residues 144–356 (DVSKILKTTP…KLYLHMGLPF (213 aa)) enclose the NR LBD domain.

It belongs to the nuclear hormone receptor family.

The protein localises to the nucleus. Functionally, orphan nuclear receptor. The sequence is that of Nuclear hormone receptor family member nhr-169 (nhr-169) from Caenorhabditis elegans.